The sequence spans 147 residues: Histone H2B (147 aa).

Residues 1 to 31 (MAPKAEKKPAEKKPAEEKKAVAEKAPAEKKP) show a composition bias toward basic and acidic residues. The tract at residues 1–55 (MAPKAEKKPAEKKPAEEKKAVAEKAPAEKKPKAGKKLPKEGGAAAGDKKKKRVKK) is disordered. Lys7, Lys35, and Lys36 each carry N6-acetyllysine. A Glycyl lysine isopeptide (Lys-Gly) (interchain with G-Cter in ubiquitin) cross-link involves residue Lys143.

Belongs to the histone H2B family. In terms of assembly, the nucleosome is a histone octamer containing two molecules each of H2A, H2B, H3 and H4 assembled in one H3-H4 heterotetramer and two H2A-H2B heterodimers. The octamer wraps approximately 147 bp of DNA. Can be acetylated to form H2BK6ac, H2BK33ac and H2BK34ac. In terms of processing, monoubiquitinated to form H2BK143ub1; may give a specific tag for epigenetic transcriptional activation.

Its subcellular location is the nucleus. It is found in the chromosome. Its function is as follows. Core component of nucleosome. Nucleosomes wrap and compact DNA into chromatin, limiting DNA accessibility to the cellular machineries which require DNA as a template. Histones thereby play a central role in transcription regulation, DNA repair, DNA replication and chromosomal stability. DNA accessibility is regulated via a complex set of post-translational modifications of histones, also called histone code, and nucleosome remodeling. The sequence is that of Histone H2B (HIS2B) from Gossypium hirsutum (Upland cotton).